Here is a 358-residue protein sequence, read N- to C-terminus: Mannonate dehydratase (358 aa).

This sequence belongs to the mannonate dehydratase family. Fe(2+) serves as cofactor. The cofactor is Mn(2+).

The enzyme catalyses D-mannonate = 2-dehydro-3-deoxy-D-gluconate + H2O. Its pathway is carbohydrate metabolism; pentose and glucuronate interconversion. Functionally, catalyzes the dehydration of D-mannonate. In Lachnoclostridium phytofermentans (strain ATCC 700394 / DSM 18823 / ISDg) (Clostridium phytofermentans), this protein is Mannonate dehydratase.